A 702-amino-acid chain; its full sequence is Arginine decarboxylase 1, chloroplastic (702 aa).

The transit peptide at 1–52 (MPALAFVDTPIDTFSSIFTPSSVSTAVVDGSCHWSPSLSSSLYRIDGWGAPY) directs the protein to the chloroplast. An N6-(pyridoxal phosphate)lysine modification is found at K136. Residues S288, G325, and 374 to 377 (ESGR) each bind pyridoxal 5'-phosphate. 320 to 330 (IDIGGGLGIDY) is a substrate binding site. 436–437 (YV) provides a ligand contact to substrate. Residue C524 is the Proton donor; shared with dimeric partner of the active site. D525 contacts substrate. Y565 serves as a coordination point for pyridoxal 5'-phosphate.

This sequence belongs to the Orn/Lys/Arg decarboxylase class-II family. SpeA subfamily. As to quaternary structure, homodimer. Only the dimer is catalytically active, as the active sites are constructed of residues from both monomers. May form a head-to-tail homodimer. Homodimer and heterodimer with ADC2. Requires pyridoxal 5'-phosphate as cofactor. It depends on Mg(2+) as a cofactor.

It is found in the plastid. The protein resides in the chloroplast. Its subcellular location is the cytoplasm. The protein localises to the cytosol. The catalysed reaction is L-arginine + H(+) = agmatine + CO2. Its pathway is amine and polyamine biosynthesis; agmatine biosynthesis; agmatine from L-arginine: step 1/1. Functionally, required for the biosynthesis of putrescine. Catalyzes the first step of polyamine (PA) biosynthesis to produce putrescine from arginine. Is a minor contributor to basal arginine decarboxylase (ADC) activity and putrescine biosynthesis. Accumulation of putrescine plays a positive role in freezing tolerance. Production of polyamines is essential for normal seed development. Controls PA homeostasis which is crucial for normal plant growth and development. This chain is Arginine decarboxylase 1, chloroplastic, found in Arabidopsis thaliana (Mouse-ear cress).